Reading from the N-terminus, the 129-residue chain is Small ribosomal subunit protein uS8 (129 aa).

Belongs to the universal ribosomal protein uS8 family. As to quaternary structure, part of the 30S ribosomal subunit.

Functionally, one of the primary rRNA binding proteins, it binds directly to 16S rRNA central domain where it helps coordinate assembly of the platform of the 30S subunit. The chain is Small ribosomal subunit protein uS8 from Nanoarchaeum equitans (strain Kin4-M).